The primary structure comprises 252 residues: 2-succinyl-6-hydroxy-2,4-cyclohexadiene-1-carboxylate synthase (252 aa).

This sequence belongs to the AB hydrolase superfamily. MenH family. Monomer.

It catalyses the reaction 5-enolpyruvoyl-6-hydroxy-2-succinyl-cyclohex-3-ene-1-carboxylate = (1R,6R)-6-hydroxy-2-succinyl-cyclohexa-2,4-diene-1-carboxylate + pyruvate. Its pathway is quinol/quinone metabolism; 1,4-dihydroxy-2-naphthoate biosynthesis; 1,4-dihydroxy-2-naphthoate from chorismate: step 3/7. The protein operates within quinol/quinone metabolism; menaquinone biosynthesis. Its function is as follows. Catalyzes a proton abstraction reaction that results in 2,5-elimination of pyruvate from 2-succinyl-5-enolpyruvyl-6-hydroxy-3-cyclohexene-1-carboxylate (SEPHCHC) and the formation of 2-succinyl-6-hydroxy-2,4-cyclohexadiene-1-carboxylate (SHCHC). The polypeptide is 2-succinyl-6-hydroxy-2,4-cyclohexadiene-1-carboxylate synthase (Shigella sonnei (strain Ss046)).